Reading from the N-terminus, the 134-residue chain is ATP synthase epsilon chain (134 aa).

The protein belongs to the ATPase epsilon chain family. In terms of assembly, F-type ATPases have 2 components, CF(1) - the catalytic core - and CF(0) - the membrane proton channel. CF(1) has five subunits: alpha(3), beta(3), gamma(1), delta(1), epsilon(1). CF(0) has three main subunits: a, b and c.

It is found in the cell inner membrane. Its function is as follows. Produces ATP from ADP in the presence of a proton gradient across the membrane. The chain is ATP synthase epsilon chain from Rhodospirillum rubrum (strain ATCC 11170 / ATH 1.1.1 / DSM 467 / LMG 4362 / NCIMB 8255 / S1).